An 880-amino-acid polypeptide reads, in one-letter code: Interference hedgehog (880 aa).

The first 20 residues, 1–20 (MTLLTSSLLLFSLLTSRLEA), serve as a signal peptide directing secretion. The Extracellular portion of the chain corresponds to 21–703 (IPVLEKSPAH…ETFNMSPMLT (683 aa)). 4 Ig-like C2-type domains span residues 45–142 (PGVR…TARL), 132–232 (PLVV…ERIQ), 252–340 (PHLL…YIKV), and 346–432 (PQIV…LQVN). Cystine bridges form between Cys-68-Cys-126, Cys-173-Cys-220, Cys-276-Cys-324, and Cys-367-Cys-414. Residues Asn-102 and Asn-209 are each glycosylated (N-linked (GlcNAc...) asparagine). The segment at 426 to 467 (GTLLQVNPKQIQEPRESGGTHRPKPNQGSKQKQMYPPTPPNV) is disordered. Fibronectin type-III domains follow at residues 461 to 567 (PPTP…LQPG) and 575 to 670 (VPEL…TQRP). Residue Asn-466 is glycosylated (N-linked (GlcNAc...) asparagine). The heparin site is built by Arg-497, Lys-501, Lys-503, and Arg-541. An N-linked (GlcNAc...) asparagine glycan is attached at Asn-557. Positions 662-697 (LKQGRTQRPKTSTTEEPTLQMGDRDTTTPSHNETFN) are disordered. Composition is skewed to polar residues over residues 665-678 (GRTQRPKTSTTEEP) and 688-697 (TTPSHNETFN). The N-linked (GlcNAc...) asparagine glycan is linked to Asn-693. A helical transmembrane segment spans residues 704–724 (GTIGGGAVLILLLISTCLCVC). The Cytoplasmic portion of the chain corresponds to 725–880 (RRRTSRSRGN…SSGSLNSVGV (156 aa)). Disordered regions lie at residues 728–762 (TSRSRGNNPNKPRMAELRDDFVPLGNCSPTKQRQR) and 775–880 (QQQQ…SVGV). 2 stretches are compositionally biased toward low complexity: residues 823-837 (RAGGSNGSNNGNNNN) and 864-880 (SSRSENLSSGSLNSVGV).

Belongs to the immunoglobulin superfamily. IHOG family. As to quaternary structure, homodimer. Heterotetramer; 2 iHog chains bind 2 hh chains when facilitated by heparin, heparin is required to promote high-affinity interactions between hh and iHog.

It localises to the membrane. In terms of biological role, mediates response to the active Hedgehog (Hh) protein signal in embryos, functioning upstream or at the level of patched (ptc). The sequence is that of Interference hedgehog from Drosophila sechellia (Fruit fly).